The following is a 375-amino-acid chain: Trichodiene synthase (375 aa).

Belongs to the trichodiene synthase family.

The catalysed reaction is (2E,6E)-farnesyl diphosphate = trichodiene + diphosphate. It functions in the pathway sesquiterpene biosynthesis; trichothecene biosynthesis. TS is a member of the terpene cyclase group of enzymes. It catalyzes the isomerization and cyclization of farnesyl pyro-phosphate to form trichodiene, the first cyclic intermediate in the biosynthetic pathway for trichothecenes. It serves to branch trichothecene biosynthesis from the isoprenoid pathway. The protein is Trichodiene synthase (TRI5) of Fusarium culmorum.